The primary structure comprises 229 residues: Demethylmenaquinone methyltransferase (229 aa).

S-adenosyl-L-methionine is bound by residues T57, D77, and D101–V102.

The protein belongs to the class I-like SAM-binding methyltransferase superfamily. MenG/UbiE family.

The enzyme catalyses a 2-demethylmenaquinol + S-adenosyl-L-methionine = a menaquinol + S-adenosyl-L-homocysteine + H(+). The protein operates within quinol/quinone metabolism; menaquinone biosynthesis; menaquinol from 1,4-dihydroxy-2-naphthoate: step 2/2. Its function is as follows. Methyltransferase required for the conversion of demethylmenaquinol (DMKH2) to menaquinol (MKH2). In Chlamydia trachomatis serovar L2 (strain ATCC VR-902B / DSM 19102 / 434/Bu), this protein is Demethylmenaquinone methyltransferase.